A 306-amino-acid chain; its full sequence is tRNA (guanine-N(7)-)-methyltransferase (306 aa).

Residues methionine 1–alanine 19 are compositionally biased toward polar residues. Residues methionine 1–glutamate 65 are disordered. S-adenosyl-L-methionine contacts are provided by residues glycine 121, glutamate 144–isoleucine 145, asparagine 180–alanine 181, and cysteine 200. The active site involves aspartate 203. Residue threonine 278–glutamate 280 coordinates S-adenosyl-L-methionine.

The protein belongs to the class I-like SAM-binding methyltransferase superfamily. TrmB family. As to quaternary structure, forms a complex with TRM82.

The protein localises to the nucleus. It catalyses the reaction guanosine(46) in tRNA + S-adenosyl-L-methionine = N(7)-methylguanosine(46) in tRNA + S-adenosyl-L-homocysteine. It functions in the pathway tRNA modification; N(7)-methylguanine-tRNA biosynthesis. Functionally, catalyzes the formation of N(7)-methylguanine at position 46 (m7G46) in tRNA. The sequence is that of tRNA (guanine-N(7)-)-methyltransferase from Lodderomyces elongisporus (strain ATCC 11503 / CBS 2605 / JCM 1781 / NBRC 1676 / NRRL YB-4239) (Yeast).